A 183-amino-acid polypeptide reads, in one-letter code: Ras-related protein Rap-2a (183 aa).

10-17 (GSGGVGKS) is a GTP binding site. Positions 32–40 (YDPTIEDFY) match the Effector region motif. GTP-binding positions include 57–61 (DTAGT) and 116–119 (NKVD). 2 S-palmitoyl cysteine lipidation sites follow: Cys-176 and Cys-177. Cys-180 carries the post-translational modification Cysteine methyl ester. Cys-180 carries the S-farnesyl cysteine lipid modification. A propeptide spans 181–183 (VIL) (removed in mature form).

Belongs to the small GTPase superfamily. Ras family. As to quaternary structure, interacts (GTP-bound form) with RUNDC3A. Interacts with PLCE1. Interacts with ARHGAP29, SGSM1, SGSM2 and SGSM3. Interacts (GTP-bound form preferentially) with TNIK (via the CNH domain); the interaction is direct and recruits RAP2A to the E3 ubiquitin ligase NEDD4. Interacts with MINK1. Interacts (GTP-bound form preferentially) with MAP4K4. Interacts with cytoskeletal actin. Interacts with RGS14; the interaction is GTP-dependent. In terms of processing, ubiquitinated; undergoes 'Lys-63' monoubiquitination and diubiquitination by NEDD4. Multiple lysine residues are probably modified. Ubiquitination requires TNIK, prevents interaction with effectors and inactivates RAP2A. Ubiquitination by the ECS(RAB40B) complex leads to RAP2A localization to lamellipodia plasma membrane, activation, and regulation of sorting at early endosomes for recycling to the lamellipodia plasma membrane. Post-translationally, palmitoylated. Palmitoylation is required for association with recycling endosome membranes and activation of TNIK.

Its subcellular location is the midbody. It localises to the cell projection. The protein localises to the lamellipodium membrane. The protein resides in the golgi apparatus. It is found in the recycling endosome membrane. Its subcellular location is the lysosome. It catalyses the reaction GTP + H2O = GDP + phosphate + H(+). With respect to regulation, activated by the guanine nucleotide-exchange factors RAPGEF3 and RAPGEF4 in a cAMP-dependent manner. Nucleotide exchange is also specifically stimulated by RAPGEF5, RASGEF1A and RASGEF1B. Its function is as follows. Small GTP-binding protein which cycles between a GDP-bound inactive and a GTP-bound active form. In its active form interacts with and regulates several effectors including MAP4K4, MINK1 and TNIK. Part of a signaling complex composed of NEDD4, RAP2A and TNIK which regulates neuronal dendrite extension and arborization during development. More generally, it is part of several signaling cascades and may regulate cytoskeletal rearrangements, cell migration, cell adhesion and cell spreading. The sequence is that of Ras-related protein Rap-2a (RAP2A) from Sus scrofa (Pig).